We begin with the raw amino-acid sequence, 673 residues long: UvrABC system protein B (673 aa).

One can recognise a Helicase ATP-binding domain in the interval 26–414; that stretch reads EGLEDGLAHQ…GDEVVDQVVR (389 aa). ATP is bound at residue 39-46; that stretch reads GVTGSGKT. Positions 92 to 115 match the Beta-hairpin motif; sequence YYDYYQPEAYVPSSDTFIEKDASI. The 167-residue stretch at 431–597 folds into the Helicase C-terminal domain; sequence QVDDLLSEIR…GLNKKVVDIL (167 aa). The 36-residue stretch at 633-668 folds into the UVR domain; that stretch reads QQKIHELEGQMMQHAQNLEFEEAAQIRDQLHQLREL.

The protein belongs to the UvrB family. As to quaternary structure, forms a heterotetramer with UvrA during the search for lesions. Interacts with UvrC in an incision complex.

It is found in the cytoplasm. Its function is as follows. The UvrABC repair system catalyzes the recognition and processing of DNA lesions. A damage recognition complex composed of 2 UvrA and 2 UvrB subunits scans DNA for abnormalities. Upon binding of the UvrA(2)B(2) complex to a putative damaged site, the DNA wraps around one UvrB monomer. DNA wrap is dependent on ATP binding by UvrB and probably causes local melting of the DNA helix, facilitating insertion of UvrB beta-hairpin between the DNA strands. Then UvrB probes one DNA strand for the presence of a lesion. If a lesion is found the UvrA subunits dissociate and the UvrB-DNA preincision complex is formed. This complex is subsequently bound by UvrC and the second UvrB is released. If no lesion is found, the DNA wraps around the other UvrB subunit that will check the other stand for damage. The polypeptide is UvrABC system protein B (Salmonella paratyphi A (strain ATCC 9150 / SARB42)).